Here is a 545-residue protein sequence, read N- to C-terminus: MAELSISPDEIRDALKDFVQSYEPGKASTTEVGYVLDAGDGIAHVQGLPGVMANELITFADGTLGLAQNLEESEIGVIVLGEFAGIEEGMEVRRTGEVLSVPVGDGYLGRVVDPLGNPIDGQGEIATEGRRALELQAPGVMQRKSVHEPMQTGIKAIDAMIPIGRGQRQLIIGDRQTGKTAIAIDTIINQKANWESGDTNKQVRCIYVAIGQKGSTIASVKGALEEAGAMEYTTIVASPASDPAGFKYLAPYTGSAIGQHWMYGGKHVLIIFDDLSKQAEAYRAVSLLLRRPPGREAYPGDVFYLHSRLLERCAKLSDELGAGSMTGLPIIETKANDVSAYIPTNVISITDGQIFLQSDLFNANQRPAVDVGISVSRVGGDAQVKSIKKVSGTLKLELAQYRSLEAFAIFASDLDAASRRQLARGARLTELLKQPQYSPFPIEEQVVSIWAGTKGKLDEVPVEDILRFERELLDHLHRNTEVLSQLKEKNVLTDDIVDAMDKAVDQFKLEFQTGEGKPLASVGSEKFEPAKAEDVNQEQIVKGKR.

173-180 (GDRQTGKT) serves as a coordination point for ATP.

The protein belongs to the ATPase alpha/beta chains family. F-type ATPases have 2 components, CF(1) - the catalytic core - and CF(0) - the membrane proton channel. CF(1) has five subunits: alpha(3), beta(3), gamma(1), delta(1), epsilon(1). CF(0) has three main subunits: a(1), b(2) and c(9-12). The alpha and beta chains form an alternating ring which encloses part of the gamma chain. CF(1) is attached to CF(0) by a central stalk formed by the gamma and epsilon chains, while a peripheral stalk is formed by the delta and b chains.

It is found in the cell membrane. It carries out the reaction ATP + H2O + 4 H(+)(in) = ADP + phosphate + 5 H(+)(out). Functionally, produces ATP from ADP in the presence of a proton gradient across the membrane. The alpha chain is a regulatory subunit. In Clavibacter michiganensis subsp. michiganensis (strain NCPPB 382), this protein is ATP synthase subunit alpha.